We begin with the raw amino-acid sequence, 491 residues long: Cobyric acid synthase (491 aa).

The GATase cobBQ-type domain occupies 253–429 (ARRVAVIRLP…WHGALEGDEL (177 aa)). Catalysis depends on cysteine 334, which acts as the Nucleophile. Residue histidine 421 is part of the active site.

Belongs to the CobB/CobQ family. CobQ subfamily.

It functions in the pathway cofactor biosynthesis; adenosylcobalamin biosynthesis. Functionally, catalyzes amidations at positions B, D, E, and G on adenosylcobyrinic A,C-diamide. NH(2) groups are provided by glutamine, and one molecule of ATP is hydrogenolyzed for each amidation. This chain is Cobyric acid synthase, found in Mycolicibacterium gilvum (strain PYR-GCK) (Mycobacterium gilvum (strain PYR-GCK)).